A 122-amino-acid polypeptide reads, in one-letter code: Small ribosomal subunit protein uS13 (122 aa).

The segment at 97 to 122 is disordered; sequence PVRGQRTHTNARTRKGPAKAIAGKKK.

This sequence belongs to the universal ribosomal protein uS13 family. In terms of assembly, part of the 30S ribosomal subunit. Forms a loose heterodimer with protein S19. Forms two bridges to the 50S subunit in the 70S ribosome.

In terms of biological role, located at the top of the head of the 30S subunit, it contacts several helices of the 16S rRNA. In the 70S ribosome it contacts the 23S rRNA (bridge B1a) and protein L5 of the 50S subunit (bridge B1b), connecting the 2 subunits; these bridges are implicated in subunit movement. Contacts the tRNAs in the A and P-sites. This Bartonella quintana (strain Toulouse) (Rochalimaea quintana) protein is Small ribosomal subunit protein uS13.